The chain runs to 2633 residues: Non-reducing polyketide synthase sor2 (2633 aa).

The N-terminal acylcarrier protein transacylase domain (SAT) stretch occupies residues 67–237; it reads VSNAQKLAEW…TTSTRTVAAL (171 aa). The Nucleophile; for transacylase activity role is filled by Cys-140. The active-site Proton donor/acceptor; for transacylase activity is His-258. The 426-residue stretch at 389-814 folds into the Ketosynthase family 3 (KS3) domain; it reads ENDIAVIGMA…GSNASVIIKQ (426 aa). Active-site for beta-ketoacyl synthase activity residues include Cys-561, His-696, and His-737. A malonyl-CoA:ACP transacylase (MAT) domain region spans residues 928-1239; the sequence is CFGGQVSTFV…SKASSQLSDV (312 aa). The interval 1307–1437 is N-terminal hotdog fold; it reads PQPVGLYTLL…GQLHFQASDD (131 aa). Positions 1307–1627 constitute a PKS/mFAS DH domain; that stretch reads PQPVGLYTLL…YAPVSLDQLF (321 aa). Residues 1338–1509 are product template (PT) domain; the sequence is MSDHAIGKAQ…SNESAGRLVR (172 aa). The segment at 1464-1627 is C-terminal hotdog fold; the sequence is GRSDEVIQGQ…YAPVSLDQLF (164 aa). Positions 1684 to 1758 constitute a Carrier domain; it reads EELWLRLRPV…GILKFLQSTL (75 aa). Ser-1718 carries the post-translational modification O-(pantetheine 4'-phosphoryl)serine. A disordered region spans residues 1762 to 1792; it reads DVHDSSETMSTVSSDGNVHSPPTSGSEMASP. Polar residues predominate over residues 1768 to 1790; the sequence is ETMSTVSSDGNVHSPPTSGSEMA. The interval 1982-2166 is methyltransferase domain; the sequence is FELMADFLTR…ASGFKHVRWT (185 aa). The tract at residues 2253 to 2495 is NADPH-binding (R) domain; that stretch reads VTGATGSLGS…TLRALPDVDG (243 aa).

Pantetheine 4'-phosphate is required as a cofactor.

It functions in the pathway secondary metabolite biosynthesis. Its function is as follows. Non-reducing polyketide synthase; part of the SOR gene cluster that mediates the biosynthesis of sorbicillinoids, a diverse group of yellow secondary metabolites that restrict growth of competing pathogenic fungi but not of bacteria. Sorbicillinoids biosynthesis requires the action of two PKSs. The SOR cluster is required for the production of trichodimerol and dihydrotrichotetronin, with sor2 being sufficient for production of trichodimerol, but not dihydrotrichotetronin in the light. Sor1 iteratively combines three acetyl units and the growing chain is modified by the ketoacyl reductase subunit, and optional by the enoyl reductase subunit in the second cycle. The polyketide is then handed over to the PKS sor2, which adds three more acetyl units, and two methyl groups. Sor2 releases an aldehyde, which undergoes spontaneous cyclization resulting in the formation of sorbicillin or 2',3'-dihydrosorbicillin. The monooxygenase sor5 oxidizes sorbicillin and 2',3'-dihydrosorbicillin to 2',3'-dihydrosorbicillinol and sorbicillinol, respectively. The oxidoreductase sor8 further converts sorbicillinol into oxosorbicillinol. Sorbicillinol is the building block for the other sorbicillinoids such as disorbicillinol, bisvertinolon, dihydrobisvertinolone, and dihydrotrichotetronine. In Hypocrea jecorina (strain QM6a) (Trichoderma reesei), this protein is Non-reducing polyketide synthase sor2.